The sequence spans 391 residues: MDSLGAVSTRLGFDLFKELKKTNDGNIFFSPVGILTAIGMVLLGTRGATASQLEEVFHSEKETKSSRIKAEEKEVIENTEAVHQQFQKFLTEISKLTNDYELNITNRLFGEKTYLFLQKYLDYVEKYYHASLEPVDFVNAADESRKKINSWVESKTNEKIKDLFPDGSISSSTKLVLVNMVYFKGQWDREFKKENTKEEKFWMNKSTSKSVQMMTQSHSFSFTFLEDLQAKILGIPYKNNDLSMFVLLPNDIDGLEKIIDKISPEKLVEWTSPGHMEERKVNLHLPRFEVEDGYDLEAVLAAMGMGDAFSEHKADYSGMSSGSGLYAQKFLHSSFVAVTEEGTEAAAATGIGFTVTSAPGHENVHCNHPFLFFIRHNESNSILFFGRFSSP.

This sequence belongs to the serpin family. Ov-serpin subfamily. As to expression, skin specific.

The protein resides in the cytoplasm. May play a role in the proliferation or differentiation of keratinocytes. This is Serpin B13 (SERPINB13) from Homo sapiens (Human).